The chain runs to 407 residues: ATP phosphoribosyltransferase regulatory subunit (407 aa).

The protein belongs to the class-II aminoacyl-tRNA synthetase family. HisZ subfamily. Heteromultimer composed of HisG and HisZ subunits.

It is found in the cytoplasm. It functions in the pathway amino-acid biosynthesis; L-histidine biosynthesis; L-histidine from 5-phospho-alpha-D-ribose 1-diphosphate: step 1/9. Its function is as follows. Required for the first step of histidine biosynthesis. May allow the feedback regulation of ATP phosphoribosyltransferase activity by histidine. The protein is ATP phosphoribosyltransferase regulatory subunit of Rippkaea orientalis (strain PCC 8801 / RF-1) (Cyanothece sp. (strain PCC 8801)).